Reading from the N-terminus, the 217-residue chain is Elongation factor Ts (217 aa).

The tract at residues 82–85 (TDFV) is involved in Mg(2+) ion dislocation from EF-Tu.

The protein belongs to the EF-Ts family.

It is found in the cytoplasm. Associates with the EF-Tu.GDP complex and induces the exchange of GDP to GTP. It remains bound to the aminoacyl-tRNA.EF-Tu.GTP complex up to the GTP hydrolysis stage on the ribosome. The polypeptide is Elongation factor Ts (Desulforamulus reducens (strain ATCC BAA-1160 / DSM 100696 / MI-1) (Desulfotomaculum reducens)).